The sequence spans 95 residues: Small ribosomal subunit protein bS6 (95 aa).

It belongs to the bacterial ribosomal protein bS6 family.

Functionally, binds together with bS18 to 16S ribosomal RNA. In Acholeplasma laidlawii (strain PG-8A), this protein is Small ribosomal subunit protein bS6.